The sequence spans 497 residues: Nucleoside transporter 1 (497 aa).

At M1–E26 the chain is on the cytoplasmic side. The chain crosses the membrane as a helical span at residues F27–V47. Over F48–N77 the chain is Extracellular. A helical transmembrane segment spans residues V78–L98. At L99–M107 the chain is on the cytoplasmic side. The helical transmembrane segment at L108–V128 threads the bilayer. The Extracellular segment spans residues P129–E135. The helical transmembrane segment at A136 to F156 threads the bilayer. Residues E157–T172 are Cytoplasmic-facing. The helical transmembrane segment at S173–V193 threads the bilayer. Topologically, residues K194–S208 are extracellular. The chain crosses the membrane as a helical span at residues Y209–M229. The Cytoplasmic portion of the chain corresponds to R230–K337. A compositionally biased stretch (basic and acidic residues) spans N286–E299. The tract at residues N286–E316 is disordered. The chain crosses the membrane as a helical span at residues W338–A358. Topologically, residues T359–M361 are extracellular. A helical transmembrane segment spans residues F362–L382. Topologically, residues G383–R400 are cytoplasmic. The chain crosses the membrane as a helical span at residues W401–S421. Topologically, residues Y422–Y432 are extracellular. A helical membrane pass occupies residues V433 to G453. At P454–R465 the chain is on the cytoplasmic side. The helical transmembrane segment at F466 to L486 threads the bilayer. The Extracellular portion of the chain corresponds to S487 to Y497.

The protein belongs to the SLC29A/ENT transporter (TC 2.A.57) family.

The protein resides in the cell membrane. The catalysed reaction is adenosine(in) = adenosine(out). It catalyses the reaction hypoxanthine(out) = hypoxanthine(in). The enzyme catalyses inosine(in) = inosine(out). It carries out the reaction uridine(out) = uridine(in). The catalysed reaction is cytidine(in) = cytidine(out). Nucleoside transporter with broad substrate specificity. Transports adenosine with high affinity. Can also transport hypoxanthine, inosine, uridine and cytidine. The chain is Nucleoside transporter 1 from Crithidia fasciculata.